The primary structure comprises 251 residues: Derlin-1 (251 aa).

S2 carries the post-translational modification N-acetylserine. Residues 2 to 15 (SDIGDWFRSIPAIT) are Cytoplasmic-facing. The chain crosses the membrane as a helical span at residues 16-31 (RYWFAATVAVPLIGKL). Topologically, residues 32–69 (GIISPAYFFLWPEAFLYRFQIWRPFTATFYFPVGPGTG) are lumenal. A helical transmembrane segment spans residues 70-89 (FLYLVNLYFLYQYSTRLEAG). Residues 90 to 94 (AFDGR) are Cytoplasmic-facing. Residues 95–115 (PADYLFMLLFNWICIVITGLA) form a helical membrane-spanning segment. Over 116-122 (MDMQLLM) the chain is Lumenal. A helical membrane pass occupies residues 123–137 (IPLIMSVLYVWAQLN). The Cytoplasmic portion of the chain corresponds to 138–154 (RDLIVSFWFGTRFKACY). The chain crosses the membrane as a helical span at residues 155–166 (LPWVILGFNYII). The Lumenal segment spans residues 167–170 (GGSV). Residues 171–189 (INELIGNLVGHLYFFLMFR) traverse the membrane as a helical segment. The Cytoplasmic portion of the chain corresponds to 190-251 (YPMDLGGRNF…WGQGFRLGDQ (62 aa)). S201 is subject to Phosphoserine. T202 carries the phosphothreonine modification. At S226 the chain carries Phosphoserine. Positions 229 to 251 (RAADQNGGGGRHNWGQGFRLGDQ) are disordered. The short motif at 241 to 248 (NWGQGFRL) is the SHP-box element.

Belongs to the derlin family. As to quaternary structure, homotetramer. The four subunits of the tetramer are arranged in a twofold symmetry. Forms homo- and heterooligomers with DERL2 and DERL3; binding to DERL3 is poorer than that between DERL2 and DERL3. Interacts (via SHP-box motif) with VCP. Interacts with AMFR, SELENOS, SEL1L, SELENOK and SYVN1, as well as with SEL1L-SYVN1 and VCP-SELENOS protein complexes; this interaction is weaker than that observed between DERL2 and these complexes. Interacts with NGLY1 and YOD1. Does not bind to EDEM1. Interacts with DNAJB9. Interacts with RNF103. Interacts with HM13. Interacts with XBP1 isoform 1 (via luminal/ectodomain domain); the interaction obviates the need for ectodomain shedding prior HM13/SPP-mediated XBP1 isoform 1 cleavage. Interacts with the signal recognition particle/SRP and the SRP receptor; in the process of endoplasmic reticulum stress-induced pre-emptive quality control. May interact with UBXN6. Interacts with ZFAND2B; probably through VCP. Interacts with CCDC47. Interacts with C18orf32. May interact with TRAM1. Forms a complex with SVIP and VCP/p97. In terms of tissue distribution, widely expressed, with lowest levels in brain and heart.

The protein resides in the endoplasmic reticulum membrane. Functional component of endoplasmic reticulum-associated degradation (ERAD) for misfolded lumenal proteins. Forms homotetramers which encircle a large channel traversing the endoplasmic reticulum (ER) membrane. This allows the retrotranslocation of misfolded proteins from the ER into the cytosol where they are ubiquitinated and degraded by the proteasome. The channel has a lateral gate within the membrane which provides direct access to membrane proteins with no need to reenter the ER lumen first. May mediate the interaction between VCP and the misfolded protein. Also involved in endoplasmic reticulum stress-induced pre-emptive quality control, a mechanism that selectively attenuates the translocation of newly synthesized proteins into the endoplasmic reticulum and reroutes them to the cytosol for proteasomal degradation. By controlling the steady-state expression of the IGF1R receptor, indirectly regulates the insulin-like growth factor receptor signaling pathway. This chain is Derlin-1, found in Mus musculus (Mouse).